The chain runs to 432 residues: MPWDFNNYYSHNMDGLISKLKLSKTESDKLKALRQIVRERTRDVFQEARQVAIDVRRQALTLESVRLKLEKTNVRYLSPEERADLARLIFEMEDEARDDFIKFQPRFWTQGSFQYDTLNRPFHPGQEMDIDDGTYMPMTVFESEPSIGHTLLLLLVDTSLKSLEAENDGWVFEEKNTCGRIKIYREKTHIDVPMYAIPKEQFQKKQTAADSAHLIKSDSVFESFALNRGGREAYAVESDKVNLALREGVRRWSVSDPKIVEDWFNESCKRIGGHLRSVCRFMKAWRDAQWEVGGPSSISLMTAVVNILDRESHNGSDLTGTMKLIARLLPEEFNRGVESPDDTDEKPLFPAESNHNVHHRAIVETMEGLYGILLAAEQSESREEALRKINEAFGKRVTNALLITSSAAAPAFLNAPSKEPSSKPINKTMVSG.

Residue 110–115 (QGSFQY) coordinates GTP. Mg(2+)-binding residues include Asp-129 and Asp-131. Arg-180 contacts ATP. A Mg(2+)-binding site is contributed by Asp-191. Ser-255 contacts ATP. The GTP site is built by Lys-283, Ser-297, and Asp-344. The tract at residues 413 to 432 (LNAPSKEPSSKPINKTMVSG) is disordered. The span at 423 to 432 (KPINKTMVSG) shows a compositional bias: polar residues.

Belongs to the CD-NTase family. A01 subfamily. Mg(2+) is required as a cofactor.

It carries out the reaction GTP + ATP = 3',3'-cGAMP + 2 diphosphate. Its function is as follows. Cyclic nucleotide synthase (second messenger synthase) of a CBASS antivirus system. CBASS (cyclic oligonucleotide-based antiphage signaling system) provides immunity against bacteriophage. The CD-NTase protein synthesizes cyclic nucleotides in response to infection; these serve as specific second messenger signals. The signals activate a diverse range of effectors, leading to bacterial cell death and thus abortive phage infection. A type II-C(GA) CBASS system. Catalyzes the synthesis of 3'3'-cyclic GMP-AMP (3'3'-cGAMP) from GTP and ATP, a second messenger in cell signal transduction. Is also able to produce c-di-AMP and c-di-GMP from ATP and GTP, respectively; however, 3'3'-cGAMP is the dominant molecule produced by DncV in vivo, contrary to the 2'3'-cGAMP produced by eukaryotes. By producing cGAMP, down-regulates csgD expression and expression of flagellum regulon genes, which leads to the down-regulation of rdar biofilm formation and flagellum-mediated swimming and swarming motility in a temperature-dependent manner. Controls the activity of cGAMP-activated phospholipase CapV, a patatin-like lipase that is a direct 3',3'-cGAMP receptor encoded in the dncV operon. The sequence is that of Cyclic GMP-AMP synthase from Escherichia coli.